A 166-amino-acid polypeptide reads, in one-letter code: Urease accessory protein UreE (166 aa).

Belongs to the UreE family.

The protein resides in the cytoplasm. Functionally, involved in urease metallocenter assembly. Binds nickel. Probably functions as a nickel donor during metallocenter assembly. The sequence is that of Urease accessory protein UreE from Pseudomonas savastanoi pv. phaseolicola (strain 1448A / Race 6) (Pseudomonas syringae pv. phaseolicola (strain 1448A / Race 6)).